We begin with the raw amino-acid sequence, 426 residues long: Protein trichome birefringence-like 19 (426 aa).

The chain crosses the membrane as a helical; Signal-anchor for type II membrane protein span at residues 15–35 (LLIAVTIATSLLTIIPLLYPL). A GDS motif motif is present at residues 142–144 (GDS). Residues 388 to 402 (DCVHWCLPGPIDNLN) carry the DCXHWCLPGXXDXWN motif motif.

It belongs to the PC-esterase family. TBL subfamily.

It localises to the membrane. In terms of biological role, may act as a bridging protein that binds pectin and other cell wall polysaccharides. Probably involved in maintaining esterification of pectins. May be involved in the specific O-acetylation of cell wall polymers. In Arabidopsis thaliana (Mouse-ear cress), this protein is Protein trichome birefringence-like 19 (TBL19).